We begin with the raw amino-acid sequence, 472 residues long: 23S rRNA (uracil(1939)-C(5))-methyltransferase RlmD (472 aa).

The segment covering 1–15 (MSRTAPHRRAPKRYK) has biased composition (basic residues). The interval 1–23 (MSRTAPHRRAPKRYKTPPPAPAH) is disordered. In terms of domain architecture, TRAM spans 23–87 (HVVTGNEPVI…PKFEQAEVVQ (65 aa)). [4Fe-4S] cluster is bound by residues C100, C106, C109, and C188. Residues Q296, F325, N330, E346, N374, and D395 each coordinate S-adenosyl-L-methionine. C428 serves as the catalytic Nucleophile.

This sequence belongs to the class I-like SAM-binding methyltransferase superfamily. RNA M5U methyltransferase family. RlmD subfamily.

It carries out the reaction uridine(1939) in 23S rRNA + S-adenosyl-L-methionine = 5-methyluridine(1939) in 23S rRNA + S-adenosyl-L-homocysteine + H(+). In terms of biological role, catalyzes the formation of 5-methyl-uridine at position 1939 (m5U1939) in 23S rRNA. The protein is 23S rRNA (uracil(1939)-C(5))-methyltransferase RlmD of Paraburkholderia xenovorans (strain LB400).